The sequence spans 522 residues: MGACFSSHTATAAADGGSGKRQQRKGDHKGKLPDGGGGEKEKEAARVEFGYERDFEGRYQVGRLLGHGQFGYTFAATDRASGDRVAVKRIDKAKMVRPVAVEDVKREVKILKELKGHENIVHFYNAFEDDSYVYIVMELCEGGELLDRILAKKNSRYSEKDAAVVVRQMLKVAAECHLHGLVHRDMKPENFLFKSTKEDSPLKATDFGLSDFIKPGKKFHDIVGSAYYVAPEVLKRRSGPESDVWSIGVITYILLCGRRPFWNKTEDGIFREVLRNKPDFRKKPWPGISSGAKDFVKKLLVKNPRARLTAAQALSHPWVREGGEASEIPVDISVLSNMRQFVKYSRFKQFALRALASTLKEEELADLKDQFDAIDVDKSGSISIEEMRHALAKDLPWRLKGPRVLEIIQAIDSNTDGLVDFEEFVAATLHIHQMAELDSERWGLRCQAAFSKFDLDGDGYITPDELRMVQHTGLKGSIEPLLEEADIDKDGRISLSEFRKLLRTASMSNLPSPRGPPNPQPL.

The span at 1 to 10 shows a compositional bias: polar residues; the sequence is MGACFSSHTA. The disordered stretch occupies residues 1-43; that stretch reads MGACFSSHTATAAADGGSGKRQQRKGDHKGKLPDGGGGEKEKE. Glycine 2 is lipidated: N-myristoyl glycine. Residues 29–43 are compositionally biased toward basic and acidic residues; that stretch reads KGKLPDGGGGEKEKE. The 261-residue stretch at 59–319 folds into the Protein kinase domain; that stretch reads YQVGRLLGHG…AAQALSHPWV (261 aa). Residues 65-73 and lysine 88 contribute to the ATP site; that span reads LGHGQFGYT. Aspartate 185 functions as the Proton acceptor in the catalytic mechanism. The autoinhibitory domain stretch occupies residues 325–355; it reads ASEIPVDISVLSNMRQFVKYSRFKQFALRAL. EF-hand domains are found at residues 362 to 397, 399 to 434, 441 to 476, and 481 to 508; these read EELADLKDQFDAIDVDKSGSISIEEMRHALAKDLPW, LKGPRVLEIIQAIDSNTDGLVDFEEFVAATLHIHQM, RWGLRCQAAFSKFDLDGDGYITPDELRMVQHTGLKG, and LLEEADIDKDGRISLSEFRKLLRTASMS. The Ca(2+) site is built by aspartate 375, aspartate 377, serine 379, serine 381, glutamate 386, aspartate 412, asparagine 414, aspartate 416, glutamate 423, aspartate 454, aspartate 456, aspartate 458, tyrosine 460, glutamate 465, aspartate 486, aspartate 488, aspartate 490, arginine 492, and glutamate 497.

It belongs to the protein kinase superfamily. Ser/Thr protein kinase family. CDPK subfamily.

It localises to the membrane. It carries out the reaction L-seryl-[protein] + ATP = O-phospho-L-seryl-[protein] + ADP + H(+). The catalysed reaction is L-threonyl-[protein] + ATP = O-phospho-L-threonyl-[protein] + ADP + H(+). Its activity is regulated as follows. Activated by calcium. Autophosphorylation may play an important role in the regulation of the kinase activity. Functionally, may play a role in signal transduction pathways that involve calcium as a second messenger. This Oryza sativa subsp. japonica (Rice) protein is Calcium-dependent protein kinase 4.